A 159-amino-acid chain; its full sequence is SsrA-binding protein (159 aa).

A disordered region spans residues 132-159; it reads KDFDKRHTEKERDSDREIQRAMRHGKDD.

This sequence belongs to the SmpB family.

It localises to the cytoplasm. Functionally, required for rescue of stalled ribosomes mediated by trans-translation. Binds to transfer-messenger RNA (tmRNA), required for stable association of tmRNA with ribosomes. tmRNA and SmpB together mimic tRNA shape, replacing the anticodon stem-loop with SmpB. tmRNA is encoded by the ssrA gene; the 2 termini fold to resemble tRNA(Ala) and it encodes a 'tag peptide', a short internal open reading frame. During trans-translation Ala-aminoacylated tmRNA acts like a tRNA, entering the A-site of stalled ribosomes, displacing the stalled mRNA. The ribosome then switches to translate the ORF on the tmRNA; the nascent peptide is terminated with the 'tag peptide' encoded by the tmRNA and targeted for degradation. The ribosome is freed to recommence translation, which seems to be the essential function of trans-translation. This Pseudomonas aeruginosa (strain LESB58) protein is SsrA-binding protein.